Here is a 294-residue protein sequence, read N- to C-terminus: NAD kinase (294 aa).

D72 (proton acceptor) is an active-site residue. NAD(+) is bound by residues 72-73 (DG), 146-147 (ND), R157, R174, D176, 187-192 (TAYALS), and Q247.

It belongs to the NAD kinase family. A divalent metal cation serves as cofactor.

The protein localises to the cytoplasm. It carries out the reaction NAD(+) + ATP = ADP + NADP(+) + H(+). In terms of biological role, involved in the regulation of the intracellular balance of NAD and NADP, and is a key enzyme in the biosynthesis of NADP. Catalyzes specifically the phosphorylation on 2'-hydroxyl of the adenosine moiety of NAD to yield NADP. This Saccharophagus degradans (strain 2-40 / ATCC 43961 / DSM 17024) protein is NAD kinase.